The chain runs to 268 residues: Hydroxyethylthiazole kinase (268 aa).

Methionine 45 serves as a coordination point for substrate. Arginine 121 and threonine 167 together coordinate ATP. Residue glycine 194 coordinates substrate.

The protein belongs to the Thz kinase family. Requires Mg(2+) as cofactor.

The catalysed reaction is 5-(2-hydroxyethyl)-4-methylthiazole + ATP = 4-methyl-5-(2-phosphooxyethyl)-thiazole + ADP + H(+). The protein operates within cofactor biosynthesis; thiamine diphosphate biosynthesis; 4-methyl-5-(2-phosphoethyl)-thiazole from 5-(2-hydroxyethyl)-4-methylthiazole: step 1/1. Its function is as follows. Catalyzes the phosphorylation of the hydroxyl group of 4-methyl-5-beta-hydroxyethylthiazole (THZ). The sequence is that of Hydroxyethylthiazole kinase from Bacillus thuringiensis subsp. konkukian (strain 97-27).